A 674-amino-acid polypeptide reads, in one-letter code: Putative kinase-like protein TMKL1 (674 aa).

A signal peptide spans 1 to 25 (MGMEALRFLHVIFFFVLILHCHCGT). The Extracellular portion of the chain corresponds to 26–295 (SLSGSSDVKL…PLKPCLGSSR (270 aa)). 4 N-linked (GlcNAc...) asparagine glycosylation sites follow: N57, N90, N95, and N110. LRR repeat units follow at residues 100 to 122 (HLLS…IGEF), 124 to 146 (MLQS…LGYT), 148 to 169 (SLSD…SIWN), and 173 to 194 (KLVS…PALP). 2 N-linked (GlcNAc...) asparagine glycosylation sites follow: N183 and N195. 3 LRR repeats span residues 200 to 222 (NLQV…ITRF), 224 to 244 (GVKS…EGLG), and 247 to 269 (ELES…GESK). N252 and N257 each carry an N-linked (GlcNAc...) asparagine glycan. Residues 296–323 (LSPGAVAGLVIGLMSGAVVVASLLIGYL) traverse the membrane as a helical segment. The Cytoplasmic segment spans residues 324–674 (QNKKRKSSIE…ETRSDAETPF (351 aa)). A disordered region spans residues 331–350 (SIESEDDLEEGDEEDEIGEK). Positions 333-348 (ESEDDLEEGDEEDEIG) are enriched in acidic residues. S334 is modified (phosphoserine). One can recognise a Protein kinase domain in the interval 373 to 674 (NATGQVMEKT…ETRSDAETPF (302 aa)). A Phosphothreonine modification is found at T375. The residue at position 454 (S454) is a Phosphoserine. The interval 649-674 (LEENRPRNRSALYSPTETRSDAETPF) is disordered.

It belongs to the protein kinase superfamily.

The protein localises to the membrane. In terms of biological role, does not seem to have conserved a kinase activity. This Arabidopsis thaliana (Mouse-ear cress) protein is Putative kinase-like protein TMKL1 (TMKL1).